Here is a 311-residue protein sequence, read N- to C-terminus: Pyrimidine-specific ribonucleoside hydrolase RihA (311 aa).

The active site involves H240.

It belongs to the IUNH family. RihA subfamily.

Its function is as follows. Hydrolyzes with equal efficiency cytidine or uridine to ribose and cytosine or uracil, respectively. The protein is Pyrimidine-specific ribonucleoside hydrolase RihA of Escherichia coli O157:H7.